Consider the following 484-residue polypeptide: MNIYTETNKNTGRLIQIIGPVVDIAFPAGNVPNIYNAVVISGKNTAGEDMCVTCEVQQLLGDRCVRAVAMNPTEGLMRGMDATDTGTPLMVPVGKTTLGRIFNVLGEPVDNLGPVETEQKLPIHRSAPAFTDLDTRLAIFETGIKVVDLLAPYRRGGKIGLFGGAGVGKTVLIMELINNIAKAHGGVSVFAGVGERTREGNDLYMEMKESGVINESNLSESKVALVYGQMNEPPGARMRVGLTALTMAEYFRDINKQDVLLFIDNIFRFVQAGSEVSALLGRMPSAVGYQPTLATEMGGLQERITSTKDGSITSIQAVYVPADDLTDPAPATTFAHLDATTVLSRGLAAKGIYPAVDPLDSTSTMLQPWIVGDEHYACAQKVKETLQRYKELQDIIAILGLDELSEEDRLLVARARKIERFLSQPFFVAEVFTGSPGKYVALAETIRGFKMVFAGELDSLPEQAFYLVGSIDEVIAKAAALTSK.

163 to 170 (GGAGVGKT) contacts ATP.

The protein belongs to the ATPase alpha/beta chains family. In terms of assembly, F-type ATPases have 2 components, CF(1) - the catalytic core - and CF(0) - the membrane proton channel. CF(1) has five subunits: alpha(3), beta(3), gamma(1), delta(1), epsilon(1). CF(0) has four main subunits: a(1), b(1), b'(1) and c(9-12).

The protein localises to the plastid. It is found in the chloroplast thylakoid membrane. The catalysed reaction is ATP + H2O + 4 H(+)(in) = ADP + phosphate + 5 H(+)(out). In terms of biological role, produces ATP from ADP in the presence of a proton gradient across the membrane. The catalytic sites are hosted primarily by the beta subunits. In Stigeoclonium helveticum (Green alga), this protein is ATP synthase subunit beta, chloroplastic.